The primary structure comprises 449 residues: Probable hexaprenyl pyrophosphate synthase, mitochondrial (449 aa).

3 residues coordinate isopentenyl diphosphate: lysine 122, arginine 125, and histidine 200. 2 residues coordinate Mg(2+): aspartate 207 and aspartate 211. An all-trans-polyprenyl diphosphate is bound at residue arginine 216. Position 217 (arginine 217) interacts with isopentenyl diphosphate. An all-trans-polyprenyl diphosphate contacts are provided by lysine 300, threonine 301, glutamine 338, and lysine 355.

This sequence belongs to the FPP/GGPP synthase family. The cofactor is Mg(2+).

Its subcellular location is the mitochondrion. It functions in the pathway cofactor biosynthesis; ubiquinone biosynthesis. In terms of biological role, assembly of polyisoprenoid side chains. The polyprenyl synthase of coenzyme Q biosynthesis catalyzes the formation from isopentenyl diphosphate of all trans-polyprenyl pyrophosphates generally ranging in length of between 6 and 10 isoprene units depending on the species. The sequence is that of Probable hexaprenyl pyrophosphate synthase, mitochondrial from Neurospora crassa (strain ATCC 24698 / 74-OR23-1A / CBS 708.71 / DSM 1257 / FGSC 987).